A 163-amino-acid polypeptide reads, in one-letter code: MITTGKVWKFGDDISTDEITPGRYNLTKDPKELAKIAFIEVRPDFARNVRPGDVVVAGKNFGIGSSRESAALALKALGIAGVIAESFGRIFYRNAINIGIPLLLGKTEGLKDGDLVTVNWETGEVRKGDEILMFEPLEDFLLEIVREGGILEYIRRRGDLCIR.

It belongs to the LeuD family. LeuD type 2 subfamily. In terms of assembly, heterodimer of LeuC and LeuD.

It catalyses the reaction (2R,3S)-3-isopropylmalate = (2S)-2-isopropylmalate. It participates in amino-acid biosynthesis; L-leucine biosynthesis; L-leucine from 3-methyl-2-oxobutanoate: step 2/4. In terms of biological role, catalyzes the isomerization between 2-isopropylmalate and 3-isopropylmalate, via the formation of 2-isopropylmaleate. In Pyrococcus horikoshii (strain ATCC 700860 / DSM 12428 / JCM 9974 / NBRC 100139 / OT-3), this protein is 3-isopropylmalate dehydratase small subunit (leuD).